Reading from the N-terminus, the 351-residue chain is F-box protein At1g47810 (351 aa).

The F-box domain occupies 8-54 (LQSLDPIPVDVLFEIFLNLPAKFLARFVCVSKLWAKIIRNQDFIRSF).

This is F-box protein At1g47810 from Arabidopsis thaliana (Mouse-ear cress).